A 161-amino-acid polypeptide reads, in one-letter code: Pathogenesis-related protein 1 (161 aa).

The first 26 residues, 1 to 26, serve as a signal peptide directing secretion; it reads MNFTGYSRFLIVFVALVGALVLPSKA. The 116-residue stretch at 34 to 149 folds into the SCP domain; sequence LRVHNQARGA…NGGTIISCNY (116 aa). Intrachain disulfides connect cysteine 70–cysteine 138, cysteine 113–cysteine 117, and cysteine 133–cysteine 147.

Belongs to the CRISP family.

Its subcellular location is the secreted. It is found in the extracellular space. The protein localises to the apoplast. In terms of biological role, partially responsible for acquired pathogen resistance. This chain is Pathogenesis-related protein 1, found in Arabidopsis thaliana (Mouse-ear cress).